Reading from the N-terminus, the 341-residue chain is Hydrogenase expression/formation protein HupE (341 aa).

Belongs to the HypE family.

Its function is as follows. May be involved in the maturation of the NifE hydrogenase. This Azotobacter chroococcum mcd 1 protein is Hydrogenase expression/formation protein HupE (hupE).